A 394-amino-acid polypeptide reads, in one-letter code: Homoserine O-succinyltransferase (394 aa).

The region spanning 54–368 (NAVLICHALS…SSPAGHDAFL (315 aa)) is the AB hydrolase-1 domain. S160 functions as the Nucleophile in the catalytic mechanism. R236 is a binding site for substrate. Catalysis depends on residues D331 and H364. D365 lines the substrate pocket.

It belongs to the AB hydrolase superfamily. MetX family. Homodimer.

It is found in the cytoplasm. It catalyses the reaction L-homoserine + succinyl-CoA = O-succinyl-L-homoserine + CoA. Its pathway is amino-acid biosynthesis; L-methionine biosynthesis via de novo pathway; O-succinyl-L-homoserine from L-homoserine: step 1/1. Transfers a succinyl group from succinyl-CoA to L-homoserine, forming succinyl-L-homoserine. In Magnetococcus marinus (strain ATCC BAA-1437 / JCM 17883 / MC-1), this protein is Homoserine O-succinyltransferase.